Consider the following 453-residue polypeptide: Putative sodium-coupled neutral amino acid transporter 11 (453 aa).

Residues 1 to 34 (MSYQQPQLRGPLQRETDPSDRESLVSGHEHGGKS) form a disordered region. The segment covering 12–32 (LQRETDPSDRESLVSGHEHGG) has biased composition (basic and acidic residues). The next 11 helical transmembrane spans lie at 39 to 59 (AVFN…PYSM), 66 to 86 (LGIL…VLLI), 106 to 126 (GFPG…IAMI), 152 to 172 (FISR…PLSL), 179 to 199 (LGKI…VVVT), 222 to 242 (AIQA…CFLV), 262 to 282 (ILVS…TFTG), 299 to 319 (VTFG…IECF), 337 to 357 (VFHV…SLLI), 359 to 379 (CLGI…IFII), and 399 to 419 (MACV…VMAI).

Belongs to the amino acid/polyamine transporter 2 family. Widely expressed.

Its subcellular location is the membrane. Functionally, putative sodium-dependent amino acid/proton antiporter. The sequence is that of Putative sodium-coupled neutral amino acid transporter 11 (Slc38a11) from Rattus norvegicus (Rat).